The primary structure comprises 431 residues: Tyrosine--tRNA ligase (431 aa).

An L-tyrosine-binding site is contributed by Tyr-34. The 'HIGH' region motif lies at 39-48; sequence PTADSLHIGH. Tyr-171 and Gln-175 together coordinate L-tyrosine. The short motif at 231-235 is the 'KMSKS' region element; that stretch reads KFGKT. Residue Lys-234 coordinates ATP. In terms of domain architecture, S4 RNA-binding spans 353 to 422; sequence INVVEALVKT…GKYTILRRGK (70 aa).

The protein belongs to the class-I aminoacyl-tRNA synthetase family. TyrS type 1 subfamily. Homodimer.

Its subcellular location is the cytoplasm. The enzyme catalyses tRNA(Tyr) + L-tyrosine + ATP = L-tyrosyl-tRNA(Tyr) + AMP + diphosphate + H(+). In terms of biological role, catalyzes the attachment of tyrosine to tRNA(Tyr) in a two-step reaction: tyrosine is first activated by ATP to form Tyr-AMP and then transferred to the acceptor end of tRNA(Tyr). This chain is Tyrosine--tRNA ligase, found in Neisseria meningitidis serogroup A / serotype 4A (strain DSM 15465 / Z2491).